Reading from the N-terminus, the 760-residue chain is Ferric/cupric reductase transmembrane component 1 (760 aa).

The signal sequence occupies residues 1–18 (MKIQQLIVFLFAVVLIDA). The Extracellular portion of the chain corresponds to 19–212 (RTPKRYSELD…NNNFNLSINY (194 aa)). Residues N78, N91, N111, N143, N155, and N207 are each glycosylated (N-linked (GlcNAc...) asparagine). Residues 119 to 177 (TTKSSSGSKTSASASKSSKSTGSSNASKSSTNAHGSNSSTSSTSSSSSKSGKGNSGTST) form a disordered region. The helical transmembrane segment at 213–233 (GSGLLGYWAGILAIAIFANMI) threads the bilayer. The Cytoplasmic portion of the chain corresponds to 234–288 (KKMFPSLTNYLSGSISNLFRKHLFLPATFRKKKAQEFSIGVYGFFDGLIPTRLET). The helical transmembrane segment at 289-309 (IIVVIFVVLTGLFSALHIHHV) threads the bilayer. At 310–324 (KDNPQYATKNAELGH) the chain is on the extracellular side. Residues 325 to 345 (LIADRTGILGTFLIPLLILFG) traverse the membrane as a helical segment. The Ferric oxidoreductase domain occupies 330 to 445 (TGILGTFLIP…HIVLVVFFVV (116 aa)). The Cytoplasmic segment spans residues 346–371 (GRNNFLQWLTGWDFATFIMYHRWISR). Positions 366 and 380 each coordinate heme. Residues 372 to 392 (VDVLLIIVHAITFSVSDKATG) traverse the membrane as a helical segment. The Extracellular portion of the chain corresponds to 393–403 (KYNTRMKRDFM). Residues 404–424 (IWGTVSTICGGFILFQAMLFF) traverse the membrane as a helical segment. Residues 425–430 (RRKCYE) lie on the Cytoplasmic side of the membrane. The helical transmembrane segment at 431–451 (VFFLIHIVLVVFFVVGGYYHL) threads the bilayer. The heme site is built by H436 and H450. Topologically, residues 452–760 (ESQGYGDFMW…EYHEQLQTWA (309 aa)) are extracellular. One can recognise an FAD-binding FR-type domain in the interval 465-583 (AVWAFDRVVR…EGPYGEPSSA (119 aa)). NADP(+) is bound at residue 575–578 (GPYG). N615 is a glycosylation site (N-linked (GlcNAc...) asparagine). NADP(+) is bound at residue 726 to 727 (CG). Residue N744 is glycosylated (N-linked (GlcNAc...) asparagine).

This sequence belongs to the ferric reductase (FRE) family. Requires FAD as cofactor. It depends on heme as a cofactor.

It is found in the cell membrane. The catalysed reaction is 2 a Fe(II)-siderophore + NADP(+) + H(+) = 2 a Fe(III)-siderophore + NADPH. In terms of biological role, ferric reductase responsible for reducing extracellular iron and copper prior to import. Catalyzes the reductive uptake of Fe(3+)-salts and Fe(3+) bound to catecholate or hydroxamate siderophores. Fe(3+) is reduced to Fe(2+), which then dissociates from the siderophore and can be imported by the high-affinity Fe(2+) transport complex in the plasma membrane. Also participates in Cu(2+) reduction and Cu(+) uptake. Involved in maintenance of cell wall integrity (CWI), mitochondrial function, and interaction between the pathogen and the host. The chain is Ferric/cupric reductase transmembrane component 1 from Candida albicans (strain SC5314 / ATCC MYA-2876) (Yeast).